The following is a 536-amino-acid chain: Pre-mRNA 3'-end-processing factor FIP1 (536 aa).

2 stretches are compositionally biased toward basic and acidic residues: residues 1 to 10 (MSAGEVERLV) and 32 to 42 (VHVHSDLAKDL). 3 disordered regions span residues 1-95 (MSAG…EDDV), 212-246 (VQQGRTGNSEKEAALPSTKAEFTSPPSLFKTGLPP), and 300-536 (FPPG…APAE). The tract at residues 1–110 (MSAGEVERLV…DIKTGAPQYG (110 aa)) is sufficient for interaction with PAPOLA. The segment at 1 to 296 (MSAGEVERLV…TEVDNNFSKP (296 aa)) is necessary for stimulating PAPOLA activity. Composition is skewed to acidic residues over residues 43–54 (DENEVERPEEEN) and 80–94 (TEDDSDSDSDDDEDD). Phosphoserine is present on residues Ser-84, Ser-86, and Ser-88. Positions 136–219 (KGVDLDAPGS…ITVQQGRTGN (84 aa)) are sufficient for interaction with CPSF4. The span at 300-344 (FPPGAPPTHLPPPPFLPPPPTVSTAPPLIPPPGFPPPPGAPPPSL) shows a compositional bias: pro residues. Tyr-366 bears the Phosphotyrosine mark. Polar residues predominate over residues 374–390 (LTSSAPSWPSLVDTTKQ). A sufficient for interaction with CPSF1 and CSTF3 region spans residues 383–536 (SLVDTTKQWD…QESTEAAPAE (154 aa)). A compositionally biased stretch (basic and acidic residues) spans 394 to 434 (YARREKDRDRDRERDRDRERERDRDRERERTRERERERDHS). The interval 397 to 432 (REKDRDRDRERDRDRERERDRDRERERTRERERERD) is arg/Asp/Glu-rich domain. Residue Ser-434 is modified to Phosphoserine. At Thr-436 the chain carries Phosphothreonine. Residues Ser-438 and Ser-442 each carry the phosphoserine modification. The span at 443–470 (DEERYRYREYAERGYERHRASREKEERH) shows a compositional bias: basic and acidic residues. Residues 484 to 493 (KSSRSNSRRR) show a composition bias toward basic residues. Ser-496 is subject to Phosphoserine. Residues 502–512 (HRRHKHKKSKR) are compositionally biased toward basic residues.

It belongs to the FIP1 family. As to quaternary structure, component of the cleavage and polyadenylation specificity factor (CPSF) complex, composed of CPSF1, CPSF2, CPSF3, CPSF4 and FIP1L1. Found in a complex with CPSF1, FIP1L1 and PAPOLA. Interacts with CPSF1, CPSF4, CSTF2 and CSTF3. Interacts with AHCYL1 (when phosphorylated); the interaction is direct and associates AHCYL1 with the CPSF complex and RNA. Interacts with PAPOLA; the interaction seems to be increased by the interaction with AHCYL1. Interacts with NUDT21/CPSF5; this interaction occurs in a RNA sequence-specific manner. Interacts (preferentially via unphosphorylated form and Arg/Glu/Asp-rich domain) with CPSF6 (via Arg/Ser-rich domain); this interaction mediates, at least in part, the interaction between the CFIm and CPSF complexes and may be inhibited by CPSF6 hyper-phosphorylation. Interacts (preferentially via unphosphorylated form and Arg/Asp/Glu-rich domain) with CPSF7 (via Arg/Ser-rich domain); this interaction mediates, at least in part, the interaction between the CFIm and CPSF complexes and may be inhibited by CPSF7 hyper-phosphorylation.

The protein resides in the nucleus. Functionally, component of the cleavage and polyadenylation specificity factor (CPSF) complex that plays a key role in pre-mRNA 3'-end formation, recognizing the AAUAAA signal sequence and interacting with poly(A) polymerase and other factors to bring about cleavage and poly(A) addition. FIP1L1 contributes to poly(A) site recognition and stimulates poly(A) addition. Binds to U-rich RNA sequence elements surrounding the poly(A) site. May act to tether poly(A) polymerase to the CPSF complex. This is Pre-mRNA 3'-end-processing factor FIP1 (Fip1l1) from Rattus norvegicus (Rat).